Reading from the N-terminus, the 106-residue chain is MSVARFSCGKTAQLSKKQTGYYSPEIFPSTGKDCNPQPANCLKDQYVLRHCCVDDRSGKMGYSVKFLVLTRMDTETASLFHCKPCYSKMTFTIYHPLTHSFFTSCW.

This is an uncharacterized protein from Escherichia coli O157:H7.